The sequence spans 233 residues: Phosphoribosylformylglycinamidine synthase subunit PurQ (233 aa).

The 225-residue stretch at 9 to 233 (RIGIVTFPGS…LSGFLSAFSS (225 aa)) folds into the Glutamine amidotransferase type-1 domain. Cysteine 92 functions as the Nucleophile in the catalytic mechanism. Residues histidine 201 and glutamate 203 contribute to the active site.

Part of the FGAM synthase complex composed of 1 PurL, 1 PurQ and 2 PurS subunits.

It localises to the cytoplasm. The enzyme catalyses N(2)-formyl-N(1)-(5-phospho-beta-D-ribosyl)glycinamide + L-glutamine + ATP + H2O = 2-formamido-N(1)-(5-O-phospho-beta-D-ribosyl)acetamidine + L-glutamate + ADP + phosphate + H(+). It catalyses the reaction L-glutamine + H2O = L-glutamate + NH4(+). Its pathway is purine metabolism; IMP biosynthesis via de novo pathway; 5-amino-1-(5-phospho-D-ribosyl)imidazole from N(2)-formyl-N(1)-(5-phospho-D-ribosyl)glycinamide: step 1/2. Its function is as follows. Part of the phosphoribosylformylglycinamidine synthase complex involved in the purines biosynthetic pathway. Catalyzes the ATP-dependent conversion of formylglycinamide ribonucleotide (FGAR) and glutamine to yield formylglycinamidine ribonucleotide (FGAM) and glutamate. The FGAM synthase complex is composed of three subunits. PurQ produces an ammonia molecule by converting glutamine to glutamate. PurL transfers the ammonia molecule to FGAR to form FGAM in an ATP-dependent manner. PurS interacts with PurQ and PurL and is thought to assist in the transfer of the ammonia molecule from PurQ to PurL. In Frankia casuarinae (strain DSM 45818 / CECT 9043 / HFP020203 / CcI3), this protein is Phosphoribosylformylglycinamidine synthase subunit PurQ.